The chain runs to 273 residues: Gamma-glutamyl cyclotransferase gliK (273 aa).

The chain crosses the membrane as a helical span at residues 227 to 243 (WLGWIILTLYGLMWSYH).

Belongs to the class-I pyridoxal-phosphate-dependent aminotransferase family.

It localises to the membrane. It catalyses the reaction an alpha-(gamma-L-glutamyl)-L-amino acid = 5-oxo-L-proline + an L-alpha-amino acid. Its pathway is mycotoxin biosynthesis. Functionally, gamma-glutamyl cyclotransferase-like protein; part of the gene cluster that mediates the biosynthesis of gliotoxin, a member of the epipolythiodioxopiperazine (ETP) class of toxins characterized by a disulfide bridged cyclic dipeptide. The first step in gliotoxin biosynthesis is the condensation of serine and phenylalanine to form the cyclo-L-phenylalanyl-L-serine diketopiperazine (DKP) by the NRPS gliP. GliP is also able to produce the DKP cyclo-L-tryptophanyl-L-serine, suggesting that the substrate specificity of the first adenylation (A) domain in gliP is sufficiently relaxed to accommodate both L-Phe and L-Trp. The cytochrome P450 monooxygenase gliC has been shown to catalyze the subsequent hydroxylation of the alpha-carbon of L-Phe in cyclo-L-phenylalanyl-L-serine whereas the second cytochrome P450 enzyme, gliF, is presumably involved in the modification of the DKP side chain. The glutathione S-transferase (GST) gliG then forms a bis-glutathionylated biosynthetic intermediate which is responsible for the sulfurization of gliotoxin. This bis-glutathionylated intermediate is subsequently processed by the gamma-glutamyl cyclotransferase gliK to remove both gamma-glutamyl moieties. Subsequent processing via gliI yields a biosynthetic intermediate, which is N-methylated via the N-methyltransferase gliN, before the gliotoxin oxidoreductase gliT-mediated disulfide bridge closure. GliN-mediated amide methylation confers stability to ETP, damping the spontaneous formation of tri- and tetrasulfides. Intracellular dithiol gliotoxin oxidized by gliT is subsequently effluxed by gliA. Gliotoxin contributes to pathogenesis during invasive aspergillosis. In macrophages and neutrophils, gliotoxin showed inhibition of various different cell functions including cytokine production, antigen presentation, phagocytosis, and production of reactive oxygen species. This Aspergillus fumigatus (strain ATCC MYA-4609 / CBS 101355 / FGSC A1100 / Af293) (Neosartorya fumigata) protein is Gamma-glutamyl cyclotransferase gliK.